The primary structure comprises 118 residues: Large ribosomal subunit protein bL20 (118 aa).

This sequence belongs to the bacterial ribosomal protein bL20 family.

Binds directly to 23S ribosomal RNA and is necessary for the in vitro assembly process of the 50S ribosomal subunit. It is not involved in the protein synthesizing functions of that subunit. This Cupriavidus metallidurans (strain ATCC 43123 / DSM 2839 / NBRC 102507 / CH34) (Ralstonia metallidurans) protein is Large ribosomal subunit protein bL20.